Here is a 295-residue protein sequence, read N- to C-terminus: Ventral anterior homeobox 1a (295 aa).

Over residues 20-33 (ISKPKDNKEIRETQ) the composition is skewed to basic and acidic residues. A disordered region spans residues 20-63 (ISKPKDNKEIRETQAKMPSTYLKEQPGTYPAPGSSELCAKNKSS). Residues 97-156 (PKRSRTSFTAEQLYRLEMEFQRCQYVVGRERTDLSRQLNLSETQVKVWFQNRRTKQKKDQ) constitute a DNA-binding region (homeobox). The segment at 203 to 226 (RAPNSSGPGTRSLATVTSTPPHQP) is disordered. A compositionally biased stretch (polar residues) spans 204-222 (APNSSGPGTRSLATVTSTP).

This sequence belongs to the EMX homeobox family.

It localises to the nucleus. Functionally, may play a role in the specification and maintenance of basal forebrain identity. The sequence is that of Ventral anterior homeobox 1a (vax1-a) from Xenopus laevis (African clawed frog).